Reading from the N-terminus, the 128-residue chain is Putative transmembrane protein 244 (128 aa).

The next 3 helical transmembrane spans lie at 17-37 (FLLCVILFYTVYYVSLSMGCV), 65-85 (VLLVSTEVTYFVCGLFFVPVV), and 93-113 (AISVTILHVAITSTVMLEFPL).

The protein resides in the membrane. This is Putative transmembrane protein 244 (TMEM244) from Homo sapiens (Human).